The sequence spans 177 residues: Antigen TyF1 (177 aa).

The protein belongs to the Dps family. Homodecamer.

The polypeptide is Antigen TyF1 (Treponema pallidum subsp. pertenue (Yaws treponeme)).